Consider the following 130-residue polypeptide: Large ribosomal subunit protein bL19 (130 aa).

This sequence belongs to the bacterial ribosomal protein bL19 family.

Its function is as follows. This protein is located at the 30S-50S ribosomal subunit interface and may play a role in the structure and function of the aminoacyl-tRNA binding site. The polypeptide is Large ribosomal subunit protein bL19 (Burkholderia vietnamiensis (strain G4 / LMG 22486) (Burkholderia cepacia (strain R1808))).